The sequence spans 113 residues: B-type lectin plumieribetin (113 aa).

A Bulb-type lectin domain is found at 1–109 (NYLSKNDELR…STEIWNSDKN (109 aa)).

As to quaternary structure, homotetramer. Interacts with alpha-1-beta-1 integrin (ITGA1/ITGB1). Post-translationally, not glycosylated. Not N-glycosylated and not O-glycosylated with the mostcommon O-linked glycoconjugates. The N-terminus is blocked. In terms of tissue distribution, expressed by sting venom glands and is also found in skin mucus. Not found in other tissues tested.

The protein localises to the secreted. Functionally, may contribute to some of the local and systemic effects of envenomation by the scorpionfish. Preferentially recognizes mannose-containing carbohydrate structures, but its interaction with single mannose residues is weak. Potently inhibits alpha-1-beta-1 integrin (ITGA1/ITGB1) binding to basement membrane collagen IV in a divalent cation-independent manner. In addition, moderately inhibits both laminin binding integrins alpha-3-beta-1 (ITGA3/ITGB1) and alpha-7-beta-1 (ITGA7/ITGB1). Weakens the cell-collagen contacts, reduces cell spreading, and alters the actin cytoskeleton, after the compensating alpha-2-beta-1 integrin is blocked. On the cellular level, fails to completely detach hepatocarcinoma HepG2 cells and primary arterial smooth muscle cells from the collagen IV fragment CB3. The protein is B-type lectin plumieribetin of Scorpaena plumieri (Spotted scorpionfish).